Reading from the N-terminus, the 190-residue chain is uncharacterized protein (190 aa).

The region spanning 1 to 58 (MDKRILAETFRLIKQKGFSFTMNDLAAALGTSKRTLYAYYSSKDQLVEAVVEQFIAEM) is the HTH tetR-type domain. Positions 21–40 (TMNDLAAALGTSKRTLYAYY) form a DNA-binding region, H-T-H motif.

This is an uncharacterized protein from Bacillus subtilis (strain 168).